The following is a 206-amino-acid chain: Transmembrane 4 L6 family member 19 (206 aa).

The Cytoplasmic portion of the chain corresponds to 1–16; sequence MLSFSRVVNCSRTCSR. A helical membrane pass occupies residues 17–37; that stretch reads FLGLSLGTASLCAAGANIALL. The Extracellular segment spans residues 38 to 54; that stretch reads FPNWDVTYLMRGLIGKH. A helical membrane pass occupies residues 55-75; that stretch reads AMLGSGLWGGGLMVLLAATLI. Residues 76 to 89 are Cytoplasmic-facing; that stretch reads SMTGSFSKSAPCLQ. The chain crosses the membrane as a helical span at residues 90–110; it reads VLIALLSSGLALLGAVICFVT. Residues 111-171 are Extracellular-facing; that stretch reads SGVALKDGPF…PSKAVVWHVA (61 aa). An N-linked (GlcNAc...) asparagine glycan is attached at N129. Residues 172–192 traverse the membrane as a helical segment; it reads FFSILLCISLLQLLLVAIHLV. The segment at 182 to 192 is important for homodimerization; it reads LQLLLVAIHLV. Topologically, residues 193 to 206 are cytoplasmic; it reads NSILGLFCSFCEKH.

Belongs to the L6 tetraspanin family. May form homodimers and homooligomers. Interacts with integrins ITGAV and ITGB3. Interacts with components of members of the V0 complex of vacuolar(H+)-ATPase (V-ATPase), including ATP6V0B and ATP6V0D2; this interaction inhibits V1-V0 complex assembly. Predominantly expressed in osteoclasts (at protein level). Also expressed in white adipose tissue, as well as in bone marrow-derived macrophages.

The protein resides in the lysosome membrane. It is found in the cytoplasm. It localises to the cytoskeleton. Its subcellular location is the cell projection. The protein localises to the filopodium. In terms of biological role, negatively regulates vacuolar (H+)-ATPase (V-ATPase) activity by interacting with members of V-ATPase V0 complex and hence inhibiting V1-V0 assembly. Required for multinucleation during osteoclast differentiation. The sequence is that of Transmembrane 4 L6 family member 19 (Tm4sf19) from Mus musculus (Mouse).